The chain runs to 62 residues: Defensin BmKDfsin4 (62 aa).

The signal sequence occupies residues 1–24 (MKTIVLLFVLALVFCTLEMGIVEA). Cystine bridges form between C28/C49, C35/C57, and C39/C59.

Belongs to the invertebrate defensin family. Type 2 subfamily.

Its subcellular location is the secreted. Dual-function peptide with antimicrobial and potassium channel-blocking activities. Shows inhibitory activity against Gram-positive bacteria such as S.aureus, B.subtilis, and M.luteus as well as methicillin-resistant S.aureus (MIC=0.1-20 uM). Does not act on bacteria by disrupting membranes. Also moderately inhibits Kv1.1/KCNA1 (25.2% inhibition at 1 uM), Kv1.2/KCNA2 (30.5% inhibition at 1 uM), and Kv1.3/KCNA3 potassium channels (IC(50)=510.2 nM, 61% inhibition at 1 uM). Inhibits potassium channels by interacting with the pore region. Does not show hemolytic activity. In vitro, dose-dependently decreases the production of Hepatitis B virus (HBV) DNA and HBV viral proteins in both culture medium and cell lysate. The chain is Defensin BmKDfsin4 from Olivierus martensii (Manchurian scorpion).